Consider the following 700-residue polypeptide: Kin of IRRE-like protein 2 (700 aa).

The signal sequence occupies residues 1-19 (MLASALLVFLCCFKGHAGS). Residues 20-507 (SPHFLQQPED…GRRDLLPTVR (488 aa)) are Extracellular-facing. Ig-like C2-type domains lie at 21 to 115 (PHFL…AQLH), 120 to 219 (PEAP…VTLS), 224 to 304 (PMVT…TALE), 309 to 391 (PILQ…ARLT), and 395 to 497 (PPVV…QIHL). An intrachain disulfide couples cysteine 42 to cysteine 100. Asparagine 140 carries an N-linked (GlcNAc...) asparagine glycan. Cystine bridges form between cysteine 143–cysteine 201 and cysteine 245–cysteine 288. The short motif at 146–148 (RGD) is the Cell attachment site element. Asparagine 298 carries an N-linked (GlcNAc...) asparagine glycan. 2 cysteine pairs are disulfide-bonded: cysteine 330–cysteine 372 and cysteine 416–cysteine 482. Asparagine 481 carries N-linked (GlcNAc...) asparagine glycosylation. Residues 508 to 528 (IVAGAASAATSLLMVITGVVL) traverse the membrane as a helical segment. Residues 529–700 (CCWRHGSLSK…PSHQRLQTHV (172 aa)) lie on the Cytoplasmic side of the membrane. A disordered region spans residues 542–576 (LVRIPGSSEGSSSRGPEEETGSSEDRGPIVHTDHS). At serine 563 the chain carries Phosphoserine. Over residues 564–576 (SEDRGPIVHTDHS) the composition is skewed to basic and acidic residues. Phosphotyrosine occurs at positions 595, 596, and 653. The segment at 671–700 (FGPPELSSGTPPFPYATLSPPSHQRLQTHV) is disordered. Positions 689–700 (SPPSHQRLQTHV) are enriched in polar residues.

The protein belongs to the immunoglobulin superfamily. Homodimer. Interacts with NPHS2/podocin (via the C-terminus). Interacts with NPHS1 (via the Ig-like domains). Interacts with FYN. N-glycosylated. Post-translationally, phosphorylated at Ser-548 or Ser-549; due to site ambiguity, the exact position of the serine phosphorylation could not be determined. Phosphorylation at residues Tyr-631 and/or Tyr-632. FYN mediates tyrosine phosphorylation in pancreatic beta-cells. In terms of processing, the extracellular domain is cleaved leading to the generation of a soluble fragment and a membrane-bound C-terminal fragment, which is further cleaved by gamma-secretase. In terms of tissue distribution, highly expressed in beta-cells of the pancreatic islets. Expression is seen in podocytes of kidney glomeruli, and in the cerebellum and hindbrain at 12.5 dpc, in the spinal cord at 10.5 dpc, and in retina and hypothalamus at 13.5 dpc.

The protein localises to the cell membrane. In terms of biological role, may regulate basal insulin secretion. In Mus musculus (Mouse), this protein is Kin of IRRE-like protein 2 (Kirrel2).